We begin with the raw amino-acid sequence, 261 residues long: Ribosomal RNA small subunit methyltransferase J (261 aa).

Residues 111 to 112, 127 to 128, 163 to 164, and Asp181 each bind S-adenosyl-L-methionine; these read RD, ER, and SS.

Belongs to the methyltransferase superfamily. RsmJ family.

The protein resides in the cytoplasm. The catalysed reaction is guanosine(1516) in 16S rRNA + S-adenosyl-L-methionine = N(2)-methylguanosine(1516) in 16S rRNA + S-adenosyl-L-homocysteine + H(+). Functionally, specifically methylates the guanosine in position 1516 of 16S rRNA. This is Ribosomal RNA small subunit methyltransferase J from Shewanella sp. (strain ANA-3).